The following is a 900-amino-acid chain: Alanine--tRNA ligase (900 aa).

Residues histidine 604, histidine 608, cysteine 708, and histidine 712 each coordinate Zn(2+).

Belongs to the class-II aminoacyl-tRNA synthetase family. It depends on Zn(2+) as a cofactor.

It localises to the cytoplasm. The enzyme catalyses tRNA(Ala) + L-alanine + ATP = L-alanyl-tRNA(Ala) + AMP + diphosphate. Functionally, catalyzes the attachment of alanine to tRNA(Ala) in a two-step reaction: alanine is first activated by ATP to form Ala-AMP and then transferred to the acceptor end of tRNA(Ala). Also edits incorrectly charged Ser-tRNA(Ala) and Gly-tRNA(Ala) via its editing domain. This is Alanine--tRNA ligase from Saccharolobus islandicus (strain M.14.25 / Kamchatka #1) (Sulfolobus islandicus).